A 99-amino-acid chain; its full sequence is A-type ATP synthase subunit F (99 aa).

Belongs to the V-ATPase F subunit family. In terms of assembly, has multiple subunits with at least A(3), B(3), C, D, E, F, H, I and proteolipid K(x).

It is found in the cell membrane. Component of the A-type ATP synthase that produces ATP from ADP in the presence of a proton gradient across the membrane. This is A-type ATP synthase subunit F from Methanococcoides burtonii (strain DSM 6242 / NBRC 107633 / OCM 468 / ACE-M).